Reading from the N-terminus, the 148-residue chain is MQKSSMLKKEVAIARRQWYLVDATDLVLGRLSVKVADILRGKNKVDYTPNVDAGDYVVVINSDKVVLTGQKALRENWYNHSHYIGGLRTRSGEEMISKYSDELIRRSVKGMLPKNKLAKQILNKLFIYKNDKHPHEAQQPTILELKLK.

It belongs to the universal ribosomal protein uL13 family. In terms of assembly, part of the 50S ribosomal subunit.

Its function is as follows. This protein is one of the early assembly proteins of the 50S ribosomal subunit, although it is not seen to bind rRNA by itself. It is important during the early stages of 50S assembly. The protein is Large ribosomal subunit protein uL13 of Ureaplasma parvum serovar 3 (strain ATCC 27815 / 27 / NCTC 11736).